The sequence spans 194 residues: Fe/S biogenesis protein NfuA (194 aa).

The [4Fe-4S] cluster site is built by cysteine 152 and cysteine 155.

This sequence belongs to the NfuA family. In terms of assembly, homodimer. [4Fe-4S] cluster is required as a cofactor.

Its function is as follows. Involved in iron-sulfur cluster biogenesis. Binds a 4Fe-4S cluster, can transfer this cluster to apoproteins, and thereby intervenes in the maturation of Fe/S proteins. Could also act as a scaffold/chaperone for damaged Fe/S proteins. In Pseudomonas putida (strain GB-1), this protein is Fe/S biogenesis protein NfuA.